We begin with the raw amino-acid sequence, 491 residues long: MDVRVRFCPSPTGTPHVGMIRTALFNWAYARHTGGKFLFRIEDTDAARDSEESYGQIIDALRWLRLDWDEGVEVGGPHAPYRQSQRSSIYRELIEKLTASGHIYESFATGEEVEAHNIALGRDPKLGYDNFERDLTDAQKAAHRAEGREPALRLRVPDEDLSFDDLVRGEITFSAGSFSDFVVVRPNRQPLYTFVNPVDDALMGVTHVLRGEDLLSSTPRQIALYHALIETGVTTFVPRFGHLPYVMGEGNKKLSKRDPESNLFHHRDRGFIPEGLVNYLTLLGWSLSHDRDVFSIDEMVAAFDVGDVNPNPARFDQKKAESINGDHIRLLEVGDFAERTIPYLVAAGVLTEPITETQRAVLAEAAPLVQERVQLLGETPGMLGFLFAEAASVTIEDDARASLPANAGEALAASIGALELVPEAEWAHEAIEATLRDALVETLGFKPRIAFGPLRVALSGRRVSPPLFESMAILGKAETLARLVRLSAALG.

Positions 9–19 (PSPTGTPHVGM) match the 'HIGH' region motif. A 'KMSKS' region motif is present at residues 253 to 257 (KLSKR). Position 256 (Lys-256) interacts with ATP.

The protein belongs to the class-I aminoacyl-tRNA synthetase family. Glutamate--tRNA ligase type 1 subfamily. In terms of assembly, monomer.

The protein localises to the cytoplasm. It carries out the reaction tRNA(Glu) + L-glutamate + ATP = L-glutamyl-tRNA(Glu) + AMP + diphosphate. Its function is as follows. Catalyzes the attachment of glutamate to tRNA(Glu) in a two-step reaction: glutamate is first activated by ATP to form Glu-AMP and then transferred to the acceptor end of tRNA(Glu). This is Glutamate--tRNA ligase from Leifsonia xyli subsp. xyli (strain CTCB07).